The following is a 195-amino-acid chain: 3-isopropylmalate dehydratase small subunit (195 aa).

The protein belongs to the LeuD family. LeuD type 1 subfamily. Heterodimer of LeuC and LeuD.

The enzyme catalyses (2R,3S)-3-isopropylmalate = (2S)-2-isopropylmalate. It participates in amino-acid biosynthesis; L-leucine biosynthesis; L-leucine from 3-methyl-2-oxobutanoate: step 2/4. Functionally, catalyzes the isomerization between 2-isopropylmalate and 3-isopropylmalate, via the formation of 2-isopropylmaleate. In Salinispora arenicola (strain CNS-205), this protein is 3-isopropylmalate dehydratase small subunit.